The sequence spans 164 residues: Phosphopantetheine adenylyltransferase (164 aa).

Substrate is bound at residue serine 9. Residues 9–10 (SF) and histidine 17 contribute to the ATP site. Residues lysine 41, leucine 73, and lysine 87 each coordinate substrate. ATP is bound by residues 88–90 (GLR), glutamate 98, and 123–129 (YSYLSSS).

It belongs to the bacterial CoaD family. Homohexamer. Mg(2+) serves as cofactor.

The protein resides in the cytoplasm. The catalysed reaction is (R)-4'-phosphopantetheine + ATP + H(+) = 3'-dephospho-CoA + diphosphate. It participates in cofactor biosynthesis; coenzyme A biosynthesis; CoA from (R)-pantothenate: step 4/5. Functionally, reversibly transfers an adenylyl group from ATP to 4'-phosphopantetheine, yielding dephospho-CoA (dPCoA) and pyrophosphate. In Clostridium botulinum (strain ATCC 19397 / Type A), this protein is Phosphopantetheine adenylyltransferase.